The primary structure comprises 310 residues: MNEKNNAVNQAGRHTSAPSPAAGFEVLLITGMSGAGRSHAANSIEDMGWYVVDNMPPKLLVPLVDMMTSSGSNIHKLAAVIDVRSRDYFDDLSAVLSHLDDLGVKTRILFLDASNEVLIKRYESVRRPHPLQQGNRLIDGILEERDLLKNLKEHADIVIDTSALSIHQLSTKLYEGLLGSGPTTVSVHIFSFGFKYGIPIDADFVADVRFLPNPFWVPELRSLTGKDKPVSDYVLSSEGAEEFLDAYEKAIAIAIEGYAQEDKHYVTIAFGCTGGQHRSVAMSEALAKRLRARGLTVSVSARELDKRSAD.

Residue 31-38 (GMSGAGRS) participates in ATP binding. Residue 82–85 (DVRS) participates in GTP binding.

It belongs to the RapZ-like family.

Functionally, displays ATPase and GTPase activities. In Bifidobacterium adolescentis (strain ATCC 15703 / DSM 20083 / NCTC 11814 / E194a), this protein is Nucleotide-binding protein BAD_0837.